The chain runs to 89 residues: Pigment dispersing factor homolog pdf-2 (89 aa).

An N-terminal signal peptide occupies residues 1-27 (MSSRISVSLLLLAVVATMFFTANVVDA).

Probable ligand of isoforms a and b of the calcitonin receptor-like protein, pdfr-1, a G-protein coupled receptor. May not signal through isoform c of pdfr-1. Involved in locomotion; may play a role in circadian rhythms of locomotor activity. Modulator of egg-laying. In Caenorhabditis elegans, this protein is Pigment dispersing factor homolog pdf-2.